A 334-amino-acid polypeptide reads, in one-letter code: Fructose-1,6-bisphosphatase class 1 (334 aa).

Residues E93, D117, L119, and D120 each contribute to the Mg(2+) site. Residues 120–123 (DGSS), N213, Y244, and K274 each bind substrate. Mg(2+) is bound at residue E280.

The protein belongs to the FBPase class 1 family. Homotetramer. Mg(2+) serves as cofactor.

The protein localises to the cytoplasm. The enzyme catalyses beta-D-fructose 1,6-bisphosphate + H2O = beta-D-fructose 6-phosphate + phosphate. It participates in carbohydrate biosynthesis; gluconeogenesis. This chain is Fructose-1,6-bisphosphatase class 1, found in Flavobacterium johnsoniae (strain ATCC 17061 / DSM 2064 / JCM 8514 / BCRC 14874 / CCUG 350202 / NBRC 14942 / NCIMB 11054 / UW101) (Cytophaga johnsonae).